Consider the following 116-residue polypeptide: Putative superoxide reductase (116 aa).

Residues H20, H46, H52, C101, and H104 each coordinate Fe cation.

Belongs to the desulfoferrodoxin family. It depends on Fe cation as a cofactor.

The catalysed reaction is reduced [rubredoxin] + superoxide + 2 H(+) = oxidized [rubredoxin] + H2O2. In terms of biological role, uses electrons from reduced NADP, by way of rubredoxin and an oxidoreductase, to catalyze the reduction of superoxide to hydrogen peroxide. In Methanocaldococcus jannaschii (strain ATCC 43067 / DSM 2661 / JAL-1 / JCM 10045 / NBRC 100440) (Methanococcus jannaschii), this protein is Putative superoxide reductase.